The primary structure comprises 218 residues: Serine/threonine-protein phosphatase 1 (218 aa).

Aspartate 24, histidine 26, aspartate 53, and asparagine 79 together coordinate Mn(2+). The active-site Proton donor is the histidine 80. Residue histidine 187 coordinates Mn(2+).

This sequence belongs to the PPP phosphatase family. PP-1 subfamily. Mn(2+) is required as a cofactor.

The catalysed reaction is O-phospho-L-seryl-[protein] + H2O = L-seryl-[protein] + phosphate. It carries out the reaction O-phospho-L-threonyl-[protein] + H2O = L-threonyl-[protein] + phosphate. Functionally, plays a key role in signaling protein misfolding via the CpxR/CPXA transducing system. It also modulates the phosphorylated status of many phosphoproteins in E.coli, some of which acting as major chaperones. Has been shown, in vitro, to act on Ser, Thr and Tyr-phosphorylated substrates. This chain is Serine/threonine-protein phosphatase 1 (pphA), found in Escherichia coli (strain K12).